The primary structure comprises 173 residues: S-ribosylhomocysteine lyase (173 aa).

Fe cation is bound by residues His-54, His-58, and Cys-128.

The protein belongs to the LuxS family. As to quaternary structure, homodimer. The cofactor is Fe cation.

The catalysed reaction is S-(5-deoxy-D-ribos-5-yl)-L-homocysteine = (S)-4,5-dihydroxypentane-2,3-dione + L-homocysteine. Its function is as follows. Involved in the synthesis of autoinducer 2 (AI-2) which is secreted by bacteria and is used to communicate both the cell density and the metabolic potential of the environment. The regulation of gene expression in response to changes in cell density is called quorum sensing. Catalyzes the transformation of S-ribosylhomocysteine (RHC) to homocysteine (HC) and 4,5-dihydroxy-2,3-pentadione (DPD). The polypeptide is S-ribosylhomocysteine lyase (Hydrogenovibrio crunogenus (strain DSM 25203 / XCL-2) (Thiomicrospira crunogena)).